The following is a 142-amino-acid chain: Large ribosomal subunit protein uL11 (142 aa).

Belongs to the universal ribosomal protein uL11 family. In terms of assembly, part of the ribosomal stalk of the 50S ribosomal subunit. Interacts with L10 and the large rRNA to form the base of the stalk. L10 forms an elongated spine to which L12 dimers bind in a sequential fashion forming a multimeric L10(L12)X complex. Post-translationally, one or more lysine residues are methylated.

Its function is as follows. Forms part of the ribosomal stalk which helps the ribosome interact with GTP-bound translation factors. This is Large ribosomal subunit protein uL11 from Liberibacter asiaticus (Citrus greening disease).